Here is a 422-residue protein sequence, read N- to C-terminus: UPF0597 protein Kole_0595 (422 aa).

Belongs to the UPF0597 family.

The sequence is that of UPF0597 protein Kole_0595 from Kosmotoga olearia (strain ATCC BAA-1733 / DSM 21960 / TBF 19.5.1).